The following is a 282-amino-acid chain: Ribosomal RNA small subunit methyltransferase I (282 aa).

Belongs to the methyltransferase superfamily. RsmI family.

It is found in the cytoplasm. The enzyme catalyses cytidine(1402) in 16S rRNA + S-adenosyl-L-methionine = 2'-O-methylcytidine(1402) in 16S rRNA + S-adenosyl-L-homocysteine + H(+). Catalyzes the 2'-O-methylation of the ribose of cytidine 1402 (C1402) in 16S rRNA. The polypeptide is Ribosomal RNA small subunit methyltransferase I (Buchnera aphidicola subsp. Acyrthosiphon pisum (strain APS) (Acyrthosiphon pisum symbiotic bacterium)).